The chain runs to 362 residues: GDSL esterase/lipase 6 (362 aa).

An N-terminal signal peptide occupies residues Met1–Ala23. Residue Ser38 is the Nucleophile of the active site. Asn50, Asn103, Asn107, Asn195, and Asn296 each carry an N-linked (GlcNAc...) asparagine glycan. Catalysis depends on residues Asp323 and His326.

The protein belongs to the 'GDSL' lipolytic enzyme family.

It is found in the secreted. The sequence is that of GDSL esterase/lipase 6 (GLIP6) from Arabidopsis thaliana (Mouse-ear cress).